The chain runs to 428 residues: Probable dual-specificity RNA methyltransferase RlmN 2 (428 aa).

E142 (proton acceptor) is an active-site residue. The Radical SAM core domain occupies 148–414 (FAGRATACVS…STVRQRRGID (267 aa)). Residues C155 and C419 are joined by a disulfide bond. C162, C166, and C169 together coordinate [4Fe-4S] cluster. A compositionally biased stretch (basic and acidic residues) spans 207–228 (MRDPSPGREAGEKSRDEADRHR). The disordered stretch occupies residues 207-232 (MRDPSPGREAGEKSRDEADRHRAPPT). S-adenosyl-L-methionine is bound by residues 244–245 (GE), S276, 299–301 (SLH), and N375. Catalysis depends on C419, which acts as the S-methylcysteine intermediate.

It belongs to the radical SAM superfamily. RlmN family. The cofactor is [4Fe-4S] cluster.

It is found in the cytoplasm. It catalyses the reaction adenosine(2503) in 23S rRNA + 2 reduced [2Fe-2S]-[ferredoxin] + 2 S-adenosyl-L-methionine = 2-methyladenosine(2503) in 23S rRNA + 5'-deoxyadenosine + L-methionine + 2 oxidized [2Fe-2S]-[ferredoxin] + S-adenosyl-L-homocysteine. The enzyme catalyses adenosine(37) in tRNA + 2 reduced [2Fe-2S]-[ferredoxin] + 2 S-adenosyl-L-methionine = 2-methyladenosine(37) in tRNA + 5'-deoxyadenosine + L-methionine + 2 oxidized [2Fe-2S]-[ferredoxin] + S-adenosyl-L-homocysteine. Its function is as follows. Specifically methylates position 2 of adenine 2503 in 23S rRNA and position 2 of adenine 37 in tRNAs. In Opitutus terrae (strain DSM 11246 / JCM 15787 / PB90-1), this protein is Probable dual-specificity RNA methyltransferase RlmN 2.